The primary structure comprises 254 residues: NH(3)-dependent NAD(+) synthetase (254 aa).

32-39 (GISGGIDS) is an ATP binding site. Asp38 provides a ligand contact to Mg(2+). Arg113 is a deamido-NAD(+) binding site. Thr133 contacts ATP. Position 138 (Glu138) interacts with Mg(2+). Positions 146 and 153 each coordinate deamido-NAD(+). Residues Lys162 and Thr184 each contribute to the ATP site. 244 to 245 (HK) is a deamido-NAD(+) binding site.

This sequence belongs to the NAD synthetase family. As to quaternary structure, homodimer.

It carries out the reaction deamido-NAD(+) + NH4(+) + ATP = AMP + diphosphate + NAD(+) + H(+). Its pathway is cofactor biosynthesis; NAD(+) biosynthesis; NAD(+) from deamido-NAD(+) (ammonia route): step 1/1. In terms of biological role, catalyzes the ATP-dependent amidation of deamido-NAD to form NAD. Uses ammonia as a nitrogen source. The polypeptide is NH(3)-dependent NAD(+) synthetase (Thermococcus kodakarensis (strain ATCC BAA-918 / JCM 12380 / KOD1) (Pyrococcus kodakaraensis (strain KOD1))).